The chain runs to 364 residues: Lytic cellulose monooxygenase (364 aa).

The signal sequence occupies residues M1 to A34. Cu cation is bound by residues H35 and H144. A Chitin-binding type-4 domain is found at H35 to V225. The tract at residues V234–H261 is disordered. The span at T245–T260 shows a compositional bias: pro residues. The CBM2 domain maps to P258–P364.

It depends on Cu(2+) as a cofactor.

Its subcellular location is the secreted. It carries out the reaction [(1-&gt;4)-beta-D-glucosyl]n+m + reduced acceptor + O2 = [(1-&gt;4)-beta-D-glucosyl]m-1-(1-&gt;4)-D-glucono-1,5-lactone + [(1-&gt;4)-beta-D-glucosyl]n + acceptor + H2O.. It functions in the pathway glycan metabolism; cellulose degradation. In terms of biological role, involved in the degradation of lignocellulosic biomass. Catalyzes the oxidative cleavage of glycosidic bonds in cellulosic substrates via a copper-dependent mechanism. Degrades phosphoric acid swollen cellulose (PASC) to oxidized cellooligosaccharides with degrees of polymerization of 4-8. Also shows activity on agricultural fiber paper pulps such as flax pulp. Is not active on chitin. This chain is Lytic cellulose monooxygenase, found in Streptomyces ambofaciens (strain ATCC 23877 / 3486 / DSM 40053 / JCM 4204 / NBRC 12836 / NRRL B-2516).